A 507-amino-acid chain; its full sequence is Putative histone deacetylase 2 (507 aa).

Residues 29–342 form a histone deacetylase region; sequence RNVAYYYHKD…WALETGVILG (314 aa). The active site involves His162. A disordered region spans residues 444 to 507; the sequence is EECFVEEDSK…RKDLNIPGIP (64 aa). Residues 482–501 show a composition bias toward basic and acidic residues; it reads SHSDVIEEAKYEDRDRRKDL.

Belongs to the histone deacetylase family. HD type 1 subfamily. May be a component of a histone deacetylase complex containing saeg-2, saeg-1 and hda-2.

It localises to the nucleus. It catalyses the reaction N(6)-acetyl-L-lysyl-[histone] + H2O = L-lysyl-[histone] + acetate. In terms of biological role, probably responsible for the deacetylation of lysine residues on the N-terminal part of the core histones (H2A, H2B, H3 and H4). Histone deacetylation gives a tag for epigenetic repression and plays an important role in transcriptional regulation, cell cycle progression and developmental events. Histone deacetylases act via the formation of large multiprotein complexes. As a likely component of a histone deacetylase complex, together with saeg-1 and hda-2, functions downstream of the cAMP-dependent kinase egl-4 to regulate the expression of genes required for egg-laying and forgaging. This Caenorhabditis elegans protein is Putative histone deacetylase 2 (hda-2).